A 361-amino-acid polypeptide reads, in one-letter code: [LysW]-lysine hydrolase (361 aa).

H67 serves as a coordination point for Zn(2+). D69 is an active-site residue. Residue D91 coordinates Zn(2+). E124 serves as the catalytic Proton acceptor. 3 residues coordinate Zn(2+): E125, E148, and H326.

The protein belongs to the peptidase M20A family. LysK subfamily. As to quaternary structure, homotetramer and homooctamer. Zn(2+) serves as cofactor. It depends on Co(2+) as a cofactor.

It localises to the cytoplasm. It carries out the reaction [amino-group carrier protein]-C-terminal-gamma-(L-lysyl)-L-glutamate + H2O = [amino-group carrier protein]-C-terminal-L-glutamate + L-lysine. Its pathway is amino-acid biosynthesis; L-lysine biosynthesis via AAA pathway; L-lysine from L-alpha-aminoadipate (Thermus route): step 5/5. Catalyzes the release of L-lysine from [LysW]-gamma-L-lysine. In vitro, can deacetylate both N(2)-acetyl-L-lysine and N(2)-acetyl-L-ornithine. The chain is [LysW]-lysine hydrolase from Thermus thermophilus (strain ATCC BAA-163 / DSM 7039 / HB27).